We begin with the raw amino-acid sequence, 755 residues long: Sentrin-specific protease 5 (755 aa).

The interval 268–321 (VQKVTGDHQETRRENGEGGSCSPFPSPEPKDPSCRHQPYFPDMDSSAVVKGTNS) is disordered. Residues 272 to 283 (TGDHQETRRENG) are compositionally biased toward basic and acidic residues. The segment at 567–724 (HMLDMDDLAT…VFVLQYCKCL (158 aa)) is protease. Active-site residues include His646, Asp663, and Cys713.

The protein belongs to the peptidase C48 family. As to quaternary structure, interacts with CCAR2.

It is found in the nucleus. Its subcellular location is the nucleolus. Protease that catalyzes two essential functions in the SUMO pathway: processing of full-length SUMO3 to its mature form and deconjugation of SUMO2 and SUMO3 from targeted proteins. Has weak proteolytic activity against full-length SUMO1 or SUMO1 conjugates. Required for cell division. The protein is Sentrin-specific protease 5 (SENP5) of Homo sapiens (Human).